Here is a 407-residue protein sequence, read N- to C-terminus: Argininosuccinate synthase (407 aa).

10-18 (AYSGGLDTS) contributes to the ATP binding site. Residues Tyr88 and Ser93 each contribute to the L-citrulline site. Gly118 contributes to the ATP binding site. Residues Thr120, Asn124, and Asp125 each coordinate L-aspartate. Residue Asn124 coordinates L-citrulline. Residues Arg128, Ser177, Ser186, Glu263, and Tyr275 each contribute to the L-citrulline site.

It belongs to the argininosuccinate synthase family. Type 1 subfamily. In terms of assembly, homotetramer.

Its subcellular location is the cytoplasm. It carries out the reaction L-citrulline + L-aspartate + ATP = 2-(N(omega)-L-arginino)succinate + AMP + diphosphate + H(+). It functions in the pathway amino-acid biosynthesis; L-arginine biosynthesis; L-arginine from L-ornithine and carbamoyl phosphate: step 2/3. This chain is Argininosuccinate synthase, found in Clostridium botulinum (strain Alaska E43 / Type E3).